The primary structure comprises 354 residues: Uroporphyrinogen decarboxylase (354 aa).

Residues 27–31, aspartate 77, tyrosine 154, serine 209, and histidine 327 contribute to the substrate site; that span reads RQAGR.

The protein belongs to the uroporphyrinogen decarboxylase family. Homodimer.

It localises to the cytoplasm. It carries out the reaction uroporphyrinogen III + 4 H(+) = coproporphyrinogen III + 4 CO2. It participates in porphyrin-containing compound metabolism; protoporphyrin-IX biosynthesis; coproporphyrinogen-III from 5-aminolevulinate: step 4/4. Functionally, catalyzes the decarboxylation of four acetate groups of uroporphyrinogen-III to yield coproporphyrinogen-III. This is Uroporphyrinogen decarboxylase from Pseudoalteromonas translucida (strain TAC 125).